The sequence spans 238 residues: Ribonuclease PH (238 aa).

Phosphate contacts are provided by residues arginine 86 and 124–126 (GTR).

It belongs to the RNase PH family. Homohexameric ring arranged as a trimer of dimers.

It carries out the reaction tRNA(n+1) + phosphate = tRNA(n) + a ribonucleoside 5'-diphosphate. Functionally, phosphorolytic 3'-5' exoribonuclease that plays an important role in tRNA 3'-end maturation. Removes nucleotide residues following the 3'-CCA terminus of tRNAs; can also add nucleotides to the ends of RNA molecules by using nucleoside diphosphates as substrates, but this may not be physiologically important. Probably plays a role in initiation of 16S rRNA degradation (leading to ribosome degradation) during starvation. The chain is Ribonuclease PH from Histophilus somni (strain 2336) (Haemophilus somnus).